Consider the following 235-residue polypeptide: N,O-diacetylmuramidase (235 aa).

The signal sequence occupies residues 1 to 17; it reads MKLSLLTVAAAAGAAVA. The Ch-type lysozyme domain maps to 29–235; sequence SVQGFDISGY…DQLQRFAKGG (207 aa). Active-site residues include D34, D122, and E124. Residues C132 and C171 are joined by a disulfide bond.

This sequence belongs to the glycosyl hydrolase 25 family.

Its subcellular location is the secreted. The catalysed reaction is Hydrolysis of (1-&gt;4)-beta-linkages between N-acetylmuramic acid and N-acetyl-D-glucosamine residues in a peptidoglycan and between N-acetyl-D-glucosamine residues in chitodextrins.. Functionally, this enzyme has both lysozyme (acetylmuramidase) and diacetylmuramidase activities. The polypeptide is N,O-diacetylmuramidase (Arthroderma benhamiae (strain ATCC MYA-4681 / CBS 112371) (Trichophyton mentagrophytes)).